Here is a 202-residue protein sequence, read N- to C-terminus: Na(+)-translocating NADH-quinone reductase subunit E (202 aa).

A run of 6 helical transmembrane segments spans residues 11–31, 35–55, 79–99, 114–134, 144–164, and 180–200; these read AVFV…FIAI, VETA…TMPV, LSFL…QILE, GVFL…LFMV, TVYG…LAGI, and LGIT…FSGV.

Belongs to the NqrDE/RnfAE family. As to quaternary structure, composed of six subunits; NqrA, NqrB, NqrC, NqrD, NqrE and NqrF.

The protein localises to the cell inner membrane. The catalysed reaction is a ubiquinone + n Na(+)(in) + NADH + H(+) = a ubiquinol + n Na(+)(out) + NAD(+). In terms of biological role, NQR complex catalyzes the reduction of ubiquinone-1 to ubiquinol by two successive reactions, coupled with the transport of Na(+) ions from the cytoplasm to the periplasm. NqrA to NqrE are probably involved in the second step, the conversion of ubisemiquinone to ubiquinol. In Ectopseudomonas mendocina (strain ymp) (Pseudomonas mendocina), this protein is Na(+)-translocating NADH-quinone reductase subunit E.